An 803-amino-acid polypeptide reads, in one-letter code: Bromodomain-containing protein 2 (803 aa).

Position 1 is an N-acetylmethionine (M1). At T6 the chain carries Phosphothreonine. S37 is subject to Phosphoserine. The segment at 53–73 (ALQLTPANPPPPEVSNPKKPG) is disordered. The Bromo 1 domain occupies 74–180 (RVTNQLQYLH…KIFLQKVASM (107 aa)). D112, Y155, N156, K157, D160, and D161 together coordinate a protein. 3 disordered regions span residues 268 to 348 (PPAQ…KLSE), 456 to 652 (EPLE…KRQL), and 739 to 803 (EKRL…SDSG). The segment covering 285–298 (TTTPTPTAILAPGS) has biased composition (low complexity). Phosphoserine is present on residues S298 and S301. Basic and acidic residues predominate over residues 316–332 (VRRESGRPIKPPRKDLP). One can recognise a Bromo 2 domain in the interval 344-453 (GKLSEQLKHC…DVFEFRYAKM (110 aa)). The span at 481-515 (SSEESSSESSSEEEEEEDEDEEEEEEESESSDSEE) shows a compositional bias: acidic residues. Residues 545 to 567 (KPKRKREKKEKKKKRKAEKHRGR) are compositionally biased toward basic residues. The Nuclear localization signal signature appears at 556–560 (KKKRK). Low complexity predominate over residues 623-632 (KTAPPALPAG). Residues 634–716 (DSEEEEESRP…SCLRKKPRKP (83 aa)) form the NET domain. Phosphoserine is present on S635. Residues 641-652 (SRPMSYDEKRQL) are compositionally biased toward basic and acidic residues. A compositionally biased stretch (low complexity) spans 777–797 (SASSSSSDSSSSSSSSSSSDT).

The protein belongs to the BET family. Homodimer. Interacts with E2F1. Interacts with (acetylated) STAT3; promoting STAT3 recruitment to chromatin. Interacts with CTCF; promoting BRD2 recruitment to chromatin.

The protein localises to the nucleus. The protein resides in the chromosome. In terms of biological role, chromatin reader protein that specifically recognizes and binds histone H4 acetylated at 'Lys-5' and 'Lys-12' (H4K5ac and H4K12ac, respectively), thereby controlling gene expression and remodeling chromatin structures. Recruits transcription factors and coactivators to target gene sites, and activates RNA polymerase II machinery for transcriptional elongation. Plays a key role in genome compartmentalization via its association with CTCF and cohesin: recruited to chromatin by CTCF and promotes formation of topologically associating domains (TADs) via its ability to bind acetylated histones, contributing to CTCF boundary formation and enhancer insulation. Also recognizes and binds acetylated non-histone proteins, such as STAT3. Involved in inflammatory response by regulating differentiation of naive CD4(+) T-cells into T-helper Th17: recognizes and binds STAT3 acetylated at 'Lys-87', promoting STAT3 recruitment to chromatin. In addition to acetylated lysines, also recognizes and binds lysine residues on histones that are both methylated and acetylated on the same side chain to form N6-acetyl-N6-methyllysine (Kacme), an epigenetic mark of active chromatin associated with increased transcriptional initiation. Specifically binds histone H4 acetyl-methylated at 'Lys-5' and 'Lys-12' (H4K5acme and H4K12acme, respectively). The chain is Bromodomain-containing protein 2 (BRD2) from Bos taurus (Bovine).